A 342-amino-acid polypeptide reads, in one-letter code: S-adenosylmethionine:tRNA ribosyltransferase-isomerase (342 aa).

Belongs to the QueA family. In terms of assembly, monomer.

The protein localises to the cytoplasm. It carries out the reaction 7-aminomethyl-7-carbaguanosine(34) in tRNA + S-adenosyl-L-methionine = epoxyqueuosine(34) in tRNA + adenine + L-methionine + 2 H(+). It participates in tRNA modification; tRNA-queuosine biosynthesis. In terms of biological role, transfers and isomerizes the ribose moiety from AdoMet to the 7-aminomethyl group of 7-deazaguanine (preQ1-tRNA) to give epoxyqueuosine (oQ-tRNA). The sequence is that of S-adenosylmethionine:tRNA ribosyltransferase-isomerase from Oceanobacillus iheyensis (strain DSM 14371 / CIP 107618 / JCM 11309 / KCTC 3954 / HTE831).